Consider the following 448-residue polypeptide: MTTPTAIRRLDAADPDFARHLDHLLSWESVSDDSVNQRVLDIIKAVRERGDAALVEFTQKFDGLQVASMADLILPRERLELALTRITPGQREALEKAAERVRSYHEKQKQDSWSYTEADGTVLGQKVTPLDRAGLYVPGGKASYPSSVLMNAIPAKVAGVTEVVMVVPTPRGEINELVLAAACIAGVDRVFTIGGAQAVAALAYGTESVPKVDKVVGPGNIYVATAKRHVFGQVGIDMIAGPSEILVVCDGQTDPDWIAMDLFSQAEHDEDAQAILVSPDAEFLDKVAASITRLLPTMERAAIVETSINGRGALIKVADMAQAIEVANRIAPEHLELSVADPEAWLPQIRHAGAIFMGRHTSEALGDYCAGPNHVLPTSGTARFSSPLGVYDFQKRSSIIYCSPQGASELGKTASVLARGESLSGHARSAEYRITDPDWTAGNKEDGK.

Positions 136, 197, and 220 each coordinate NAD(+). Substrate contacts are provided by serine 243, glutamine 265, and histidine 268. Zn(2+) is bound by residues glutamine 265 and histidine 268. Catalysis depends on proton acceptor residues glutamate 333 and histidine 334. Substrate-binding residues include histidine 334, aspartate 367, glutamate 421, and histidine 426. Aspartate 367 contributes to the Zn(2+) binding site. Histidine 426 contacts Zn(2+).

This sequence belongs to the histidinol dehydrogenase family. The cofactor is Zn(2+).

The enzyme catalyses L-histidinol + 2 NAD(+) + H2O = L-histidine + 2 NADH + 3 H(+). Its pathway is amino-acid biosynthesis; L-histidine biosynthesis; L-histidine from 5-phospho-alpha-D-ribose 1-diphosphate: step 9/9. In terms of biological role, catalyzes the sequential NAD-dependent oxidations of L-histidinol to L-histidinaldehyde and then to L-histidine. The protein is Histidinol dehydrogenase of Pseudomonas syringae pv. syringae (strain B728a).